Consider the following 327-residue polypeptide: DNA-directed RNA polymerase subunit alpha (327 aa).

Residues 1-233 (MVREKVKVST…NLFIPFLHVE (233 aa)) are alpha N-terminal domain (alpha-NTD). An alpha C-terminal domain (alpha-CTD) region spans residues 267-327 (LAFQYIFIDQ…KKILDILEKK (61 aa)).

It belongs to the RNA polymerase alpha chain family. In plastids the minimal PEP RNA polymerase catalytic core is composed of four subunits: alpha, beta, beta', and beta''. When a (nuclear-encoded) sigma factor is associated with the core the holoenzyme is formed, which can initiate transcription.

It localises to the plastid. It is found in the chloroplast. The catalysed reaction is RNA(n) + a ribonucleoside 5'-triphosphate = RNA(n+1) + diphosphate. In terms of biological role, DNA-dependent RNA polymerase catalyzes the transcription of DNA into RNA using the four ribonucleoside triphosphates as substrates. The sequence is that of DNA-directed RNA polymerase subunit alpha from Lobularia maritima (Sweet alyssum).